Consider the following 456-residue polypeptide: Outer membrane efflux protein BepC (456 aa).

The signal sequence occupies residues 1–28 (MRYTVFKACKELVAAAVLLSGTVLTGQA). Residues 312–341 (RTSAQIRQSKEQLGQARIEVDVVQDKVRQA) are a coiled coil.

Belongs to the outer membrane factor (OMF) (TC 1.B.17) family. As to quaternary structure, probably part of a tripartite efflux pump, which is composed of an outer membrane efflux protein, an inner membrane protein and a protein that expands the periplasmic space. Could form a tripartite pump with BepD and BepE or with BepF and BepG.

It is found in the cell outer membrane. Involved in the efflux of toxic and relatively hydrophobic compounds. Influences survival inside the host. This is Outer membrane efflux protein BepC (bepC) from Brucella suis biovar 1 (strain 1330).